We begin with the raw amino-acid sequence, 88 residues long: MKNIVKIEQLELASAVVELGKKVGAGLAAIGLTGAGAGVGIVFAAFILAVGMNPNLRGELFKLAMLGFALSEAVGLLALMMSFLILYS.

The next 2 helical transmembrane spans lie at 30-50 (IGLT…ILAV) and 66-86 (LGFA…FLIL).

It belongs to the ATPase C chain family. F-type ATPases have 2 components, CF(1) - the catalytic core - and CF(0) - the membrane proton channel. CF(1) has five subunits: alpha(3), beta(3), gamma(1), delta(1), epsilon(1). CF(0) has three main subunits: a, b and c.

The protein resides in the mitochondrion membrane. In terms of biological role, mitochondrial membrane ATP synthase (F(1)F(0) ATP synthase or Complex V) produces ATP from ADP in the presence of a proton gradient across the membrane which is generated by electron transport complexes of the respiratory chain. F-type ATPases consist of two structural domains, F(1) - containing the extramembraneous catalytic core and F(0) - containing the membrane proton channel, linked together by a central stalk and a peripheral stalk. During catalysis, ATP synthesis in the catalytic domain of F(1) is coupled via a rotary mechanism of the central stalk subunits to proton translocation. Part of the complex F(0) domain. A homomeric c-ring of probably 10 subunits is part of the complex rotary element. The chain is ATP synthase subunit 9, mitochondrial (atp9) from Dictyostelium citrinum (Slime mold).